A 117-amino-acid polypeptide reads, in one-letter code: Anti-adapter protein IraM (117 aa).

This sequence belongs to the IraM/RssC family.

It is found in the cytoplasm. In terms of biological role, involved in the stabilization of the sigma stress factor RpoS. The chain is Anti-adapter protein IraM from Klebsiella pneumoniae (strain 342).